The primary structure comprises 432 residues: D-amino acid dehydrogenase (432 aa).

Valine 3–tryptophan 17 contacts FAD.

Belongs to the DadA oxidoreductase family. FAD serves as cofactor.

It catalyses the reaction a D-alpha-amino acid + A + H2O = a 2-oxocarboxylate + AH2 + NH4(+). It functions in the pathway amino-acid degradation; D-alanine degradation; NH(3) and pyruvate from D-alanine: step 1/1. In terms of biological role, oxidative deamination of D-amino acids. The chain is D-amino acid dehydrogenase from Shigella boydii serotype 18 (strain CDC 3083-94 / BS512).